Here is a 244-residue protein sequence, read N- to C-terminus: MALISTRRTLSTLLNKTLSSSTSYSSSFPTLSSRSRFAMPLIEKVSSSRTSLGPCYISTRPKTSGSGYSPLNDPSPNWSNRPPKETILLDGCDYEHWLIVMEFTDPKPTEEEMINSYVKTLTSVLGCEEEAKKKIYSVCTSTYTGFGALISEELSCKVKALPGVLWVLPDSYLDVPNKDYGGDLYVEGKVIPRPQYRFTEQRHTRPRPRPRYDRRRETMQVERREPSMGLHSPVNPGEFNKPSA.

Residues 1-62 (MALISTRRTL…GPCYISTRPK (62 aa)) constitute a mitochondrion transit peptide. Disordered regions lie at residues 59–82 (TRPK…SNRP) and 196–244 (YRFT…KPSA). The segment covering 60–80 (RPKTSGSGYSPLNDPSPNWSN) has biased composition (polar residues). The span at 210–226 (PRYDRRRETMQVERREP) shows a compositional bias: basic and acidic residues.

This sequence belongs to the MORF family. As to quaternary structure, heterodimer with MORF1. Homodimer and heterodimers with MORF8/RIP1, MORF4/RIP4 and MORF5/RIP5.

The protein resides in the mitochondrion. Involved in organellar RNA editing. Required for the processing of RNA editing sites in mitochondria. In Arabidopsis thaliana (Mouse-ear cress), this protein is Multiple organellar RNA editing factor 3, mitochondrial.